Reading from the N-terminus, the 133-residue chain is Transcription antitermination protein NusB (133 aa).

The protein belongs to the NusB family.

Its function is as follows. Involved in transcription antitermination. Required for transcription of ribosomal RNA (rRNA) genes. Binds specifically to the boxA antiterminator sequence of the ribosomal RNA (rrn) operons. In Clostridium novyi (strain NT), this protein is Transcription antitermination protein NusB.